A 522-amino-acid chain; its full sequence is Endochitinase 11 (522 aa).

An N-terminal signal peptide occupies residues 1 to 24 (MLFSMVMFTERWWVGSKDCPRVPA). N-linked (GlcNAc...) asparagine glycosylation is found at N148 and N275. In terms of domain architecture, GH18 spans 235–522 (KHVYAPYVDF…ALTCLRNSTA (288 aa)). E346 serves as the catalytic Proton donor. N455 and N519 each carry an N-linked (GlcNAc...) asparagine glycan.

The protein belongs to the glycosyl hydrolase 18 family. Chitinase class V subfamily.

The protein resides in the secreted. It carries out the reaction Random endo-hydrolysis of N-acetyl-beta-D-glucosaminide (1-&gt;4)-beta-linkages in chitin and chitodextrins.. Secreted chitinase involved in the degradation of chitin, a component of the cell walls of fungi and exoskeletal elements of some animals (including worms and arthropods). Participates in the infection process and directly acts in the penetration process of the host cuticle. The sequence is that of Endochitinase 11 (chi11) from Metarhizium anisopliae (Entomophthora anisopliae).